A 418-amino-acid polypeptide reads, in one-letter code: MFKDISIKDFDPVLAKAMAAESVRQENHIELIASENYCSQAVMEAQGTDLTNKYAEGYPGKRYYGGCEHVDVVEQLAIDRAKELFGAEYVNVQPHSGSQANSAVFLALLEANDTVLGMSLDAGGHLTHGAHINFSGLNYNAVQYGLVEGTGLIDYDQVESLAKEHKPKMIIAGFSAYSQVVDWARFREIADEVGAYLLVDMAHVAGLIAGGVYPSPVPFADVVTTTTHKTLRGPRSGMILARDEKLAKKLNSAVFPGNQGGPLMHVIAAKAICFKEALENNFKTYQQQVVKNAQAMAKVIQERGYEIISGGTENHLMLISLVKQEMTGKEADKWLGDAHITVNKNAVPNDPKSPFVTSGIRIGTPAITTRGFNEAQAGALAGWICDVLDSRGDEAATAEVRSKVEAICKELPVYAKNQ.

(6S)-5,6,7,8-tetrahydrofolate is bound by residues L120 and 124-126 (GHL). K229 is modified (N6-(pyridoxal phosphate)lysine). 353 to 355 (SPF) contacts (6S)-5,6,7,8-tetrahydrofolate.

This sequence belongs to the SHMT family. As to quaternary structure, homodimer. Pyridoxal 5'-phosphate serves as cofactor.

The protein resides in the cytoplasm. It carries out the reaction (6R)-5,10-methylene-5,6,7,8-tetrahydrofolate + glycine + H2O = (6S)-5,6,7,8-tetrahydrofolate + L-serine. It participates in one-carbon metabolism; tetrahydrofolate interconversion. The protein operates within amino-acid biosynthesis; glycine biosynthesis; glycine from L-serine: step 1/1. In terms of biological role, catalyzes the reversible interconversion of serine and glycine with tetrahydrofolate (THF) serving as the one-carbon carrier. This reaction serves as the major source of one-carbon groups required for the biosynthesis of purines, thymidylate, methionine, and other important biomolecules. Also exhibits THF-independent aldolase activity toward beta-hydroxyamino acids, producing glycine and aldehydes, via a retro-aldol mechanism. This is Serine hydroxymethyltransferase from Psychrobacter arcticus (strain DSM 17307 / VKM B-2377 / 273-4).